Here is a 243-residue protein sequence, read N- to C-terminus: 3-deoxy-manno-octulosonate cytidylyltransferase (243 aa).

This sequence belongs to the KdsB family.

Its subcellular location is the cytoplasm. It catalyses the reaction 3-deoxy-alpha-D-manno-oct-2-ulosonate + CTP = CMP-3-deoxy-beta-D-manno-octulosonate + diphosphate. The protein operates within nucleotide-sugar biosynthesis; CMP-3-deoxy-D-manno-octulosonate biosynthesis; CMP-3-deoxy-D-manno-octulosonate from 3-deoxy-D-manno-octulosonate and CTP: step 1/1. Its pathway is bacterial outer membrane biogenesis; lipopolysaccharide biosynthesis. In terms of biological role, activates KDO (a required 8-carbon sugar) for incorporation into bacterial lipopolysaccharide in Gram-negative bacteria. The sequence is that of 3-deoxy-manno-octulosonate cytidylyltransferase from Bartonella tribocorum (strain CIP 105476 / IBS 506).